The primary structure comprises 309 residues: Ribonuclease Z (309 aa).

The Zn(2+) site is built by histidine 63, histidine 65, aspartate 67, histidine 68, histidine 145, aspartate 216, and histidine 274. Aspartate 67 (proton acceptor) is an active-site residue.

This sequence belongs to the RNase Z family. In terms of assembly, homodimer. Requires Zn(2+) as cofactor.

The enzyme catalyses Endonucleolytic cleavage of RNA, removing extra 3' nucleotides from tRNA precursor, generating 3' termini of tRNAs. A 3'-hydroxy group is left at the tRNA terminus and a 5'-phosphoryl group is left at the trailer molecule.. Its function is as follows. Zinc phosphodiesterase, which displays some tRNA 3'-processing endonuclease activity. Probably involved in tRNA maturation, by removing a 3'-trailer from precursor tRNA. This Streptococcus suis (strain 98HAH33) protein is Ribonuclease Z.